Here is a 65-residue protein sequence, read N- to C-terminus: Alpha-conotoxin BnIA (65 aa).

Positions 1 to 21 (MGMRMMFTMFLLVVLATTVVS) are cleaved as a signal peptide. A propeptide spanning residues 22-48 (FASDRASDGRNAAAKDKASDLVALTVK) is cleaved from the precursor. 2 disulfide bridges follow: Cys-50/Cys-56 and Cys-51/Cys-64. Residues 52-54 (SHP) are ser-Xaa-Pro motif, crucial for potent interaction with nAChR. Position 64 is a cysteine amide (Cys-64).

It belongs to the conotoxin A superfamily. In terms of tissue distribution, expressed by the venom duct.

Its subcellular location is the secreted. Functionally, alpha-conotoxins act on postsynaptic membranes, they bind to the nicotinic acetylcholine receptors (nAChR) and thus inhibit them. This toxin inhibits acetylcholine-evoked currents reversibly in oocytes expressing the human alpha-7/CHRNA7 nAChR, and blocks nerve-evoked skeletal muscle contractions in isolated mouse neuromuscular preparations, but with a very low affinity. This is Alpha-conotoxin BnIA from Conus bandanus (Banded marble cone).